The primary structure comprises 671 residues: uncharacterized protein (671 aa).

Residues 39 to 56 (ATVTVVILLLILLLGWGY) form a helical membrane-spanning segment.

It localises to the membrane. This is an uncharacterized protein from Treponema pallidum (strain Nichols).